A 173-amino-acid polypeptide reads, in one-letter code: uncharacterized protein (173 aa).

The interval 49-72 is disordered; it reads PTRSGRTSNSGNRGPVMTSTSSIN.

This is an uncharacterized protein from Human adenovirus B serotype 7 (HAdV-7).